The chain runs to 359 residues: DNA replication and repair protein RecF (359 aa).

An ATP-binding site is contributed by 30 to 37 (GPNGSGKT).

The protein belongs to the RecF family.

It is found in the cytoplasm. Functionally, the RecF protein is involved in DNA metabolism; it is required for DNA replication and normal SOS inducibility. RecF binds preferentially to single-stranded, linear DNA. It also seems to bind ATP. In Aliivibrio salmonicida (strain LFI1238) (Vibrio salmonicida (strain LFI1238)), this protein is DNA replication and repair protein RecF.